The following is a 321-amino-acid chain: Beta-ketoacyl-[acyl-carrier-protein] synthase III (321 aa).

Catalysis depends on residues Cys-116 and His-248. The segment at 249–253 (QANLR) is ACP-binding. The active site involves Asn-278.

Belongs to the thiolase-like superfamily. FabH family. As to quaternary structure, homodimer.

It localises to the cytoplasm. The catalysed reaction is malonyl-[ACP] + acetyl-CoA + H(+) = 3-oxobutanoyl-[ACP] + CO2 + CoA. Its pathway is lipid metabolism; fatty acid biosynthesis. Catalyzes the condensation reaction of fatty acid synthesis by the addition to an acyl acceptor of two carbons from malonyl-ACP. Catalyzes the first condensation reaction which initiates fatty acid synthesis and may therefore play a role in governing the total rate of fatty acid production. Possesses both acetoacetyl-ACP synthase and acetyl transacylase activities. Its substrate specificity determines the biosynthesis of branched-chain and/or straight-chain of fatty acids. This Yersinia enterocolitica serotype O:8 / biotype 1B (strain NCTC 13174 / 8081) protein is Beta-ketoacyl-[acyl-carrier-protein] synthase III.